A 204-amino-acid polypeptide reads, in one-letter code: Inner membrane-spanning protein YciB (204 aa).

A run of 5 helical transmembrane segments spans residues 48-68 (ILFA…LYFF), 73-93 (FESM…ATLM), 102-122 (WKPT…QLFT), 147-167 (GAWI…AYAF), and 170-190 (AVWV…FVVG).

It belongs to the YciB family.

Its subcellular location is the cell inner membrane. Functionally, plays a role in cell envelope biogenesis, maintenance of cell envelope integrity and membrane homeostasis. In Nitrosococcus oceani (strain ATCC 19707 / BCRC 17464 / JCM 30415 / NCIMB 11848 / C-107), this protein is Inner membrane-spanning protein YciB.